The following is a 424-amino-acid chain: Serine hydroxymethyltransferase (424 aa).

Residues Leu-118 and Gly-122 to Leu-124 each bind (6S)-5,6,7,8-tetrahydrofolate. Lys-227 is subject to N6-(pyridoxal phosphate)lysine. Ser-351–Phe-353 provides a ligand contact to (6S)-5,6,7,8-tetrahydrofolate.

Belongs to the SHMT family. Homodimer. Requires pyridoxal 5'-phosphate as cofactor.

Its subcellular location is the cytoplasm. The enzyme catalyses (6R)-5,10-methylene-5,6,7,8-tetrahydrofolate + glycine + H2O = (6S)-5,6,7,8-tetrahydrofolate + L-serine. It participates in one-carbon metabolism; tetrahydrofolate interconversion. The protein operates within amino-acid biosynthesis; glycine biosynthesis; glycine from L-serine: step 1/1. In terms of biological role, catalyzes the reversible interconversion of serine and glycine with tetrahydrofolate (THF) serving as the one-carbon carrier. This reaction serves as the major source of one-carbon groups required for the biosynthesis of purines, thymidylate, methionine, and other important biomolecules. Also exhibits THF-independent aldolase activity toward beta-hydroxyamino acids, producing glycine and aldehydes, via a retro-aldol mechanism. The polypeptide is Serine hydroxymethyltransferase (Thermosipho melanesiensis (strain DSM 12029 / CIP 104789 / BI429)).